A 341-amino-acid polypeptide reads, in one-letter code: L-threonine 3-dehydrogenase (341 aa).

C38 provides a ligand contact to Zn(2+). Active-site charge relay system residues include T40 and H43. Residues H63, E64, C93, C96, C99, and C107 each coordinate Zn(2+). Residues I175, D195, R200, 262 to 264 (LGI), and 286 to 287 (IY) contribute to the NAD(+) site.

This sequence belongs to the zinc-containing alcohol dehydrogenase family. Homotetramer. Zn(2+) is required as a cofactor.

It localises to the cytoplasm. The enzyme catalyses L-threonine + NAD(+) = (2S)-2-amino-3-oxobutanoate + NADH + H(+). The protein operates within amino-acid degradation; L-threonine degradation via oxydo-reductase pathway; glycine from L-threonine: step 1/2. Catalyzes the NAD(+)-dependent oxidation of L-threonine to 2-amino-3-ketobutyrate. This Escherichia coli O127:H6 (strain E2348/69 / EPEC) protein is L-threonine 3-dehydrogenase.